The primary structure comprises 268 residues: 4-diphosphocytidyl-2-C-methyl-D-erythritol kinase (268 aa).

Residue lysine 9 is part of the active site. Residue 88–98 (PPGAGLGGGSS) coordinates ATP. Residue aspartate 130 is part of the active site.

Belongs to the GHMP kinase family. IspE subfamily.

It catalyses the reaction 4-CDP-2-C-methyl-D-erythritol + ATP = 4-CDP-2-C-methyl-D-erythritol 2-phosphate + ADP + H(+). The protein operates within isoprenoid biosynthesis; isopentenyl diphosphate biosynthesis via DXP pathway; isopentenyl diphosphate from 1-deoxy-D-xylulose 5-phosphate: step 3/6. Catalyzes the phosphorylation of the position 2 hydroxy group of 4-diphosphocytidyl-2C-methyl-D-erythritol. This is 4-diphosphocytidyl-2-C-methyl-D-erythritol kinase from Aquifex aeolicus (strain VF5).